The primary structure comprises 82 residues: RNA-binding protein Hfq (82 aa).

Positions 11–71 (DTFLNHVRKT…ISTIMPGAPI (61 aa)) constitute a Sm domain.

This sequence belongs to the Hfq family. In terms of assembly, homohexamer.

In terms of biological role, RNA chaperone that binds small regulatory RNA (sRNAs) and mRNAs to facilitate mRNA translational regulation in response to envelope stress, environmental stress and changes in metabolite concentrations. Also binds with high specificity to tRNAs. This Rhodopseudomonas palustris (strain TIE-1) protein is RNA-binding protein Hfq.